We begin with the raw amino-acid sequence, 90 residues long: Large ribosomal subunit protein bL27 (90 aa).

Residues 1–24 form a disordered region; that stretch reads MAHKKGTGSTRNGRDSNSKRLGVK.

Belongs to the bacterial ribosomal protein bL27 family.

The chain is Large ribosomal subunit protein bL27 from Prochlorococcus marinus (strain NATL1A).